The chain runs to 828 residues: Sarcolemmal membrane-associated protein (828 aa).

Residues 1 to 163 form a necessary for targeting to centrosomes region; the sequence is MPSALAIFTC…AANTPSMYSQ (163 aa). Topologically, residues 1–802 are cytoplasmic; sequence MPSALAIFTC…REKGNNKPWP (802 aa). Residues 28–85 form the FHA domain; it reads IKIGRSVARCRPAQNNATFDCKVLSRNHALVWFDHKTGKFYLQDTKSSNGTFINSQRL. Phosphoserine is present on Ser-148. Coiled coils occupy residues 167–202 and 230–388; these read QLSQYLQEALHREQMLEQKLATLQRLLAITQEASDT and NQTE…QEKT. Residues 339–359 traverse the membrane as a helical; Anchor for type IV membrane protein segment; the sequence is KKELQHKIDEMEEKEQELQAK. Basic and acidic residues predominate over residues 433 to 446; the sequence is KLSKENQTRAKESD. The disordered stretch occupies residues 433–467; it reads KLSKENQTRAKESDFSDTLSPSKEKSSDDTTDAQM. Phosphoserine occurs at positions 448 and 452. A coiled-coil region spans residues 477 to 799; that stretch reads AKVSLLKDDL…KLLREKGNNK (323 aa). Residues 803–823 traverse the membrane as a helical; Anchor for type IV membrane protein segment; the sequence is WMPMLAALVAVTAIVLYVPGL. The Extracellular segment spans residues 824–828; that stretch reads ARASP.

The protein belongs to the SLMAP family. In terms of assembly, homodimer. Interacts with myosin. Interacts with SIKE1 and both associate with the STRIPAK core complex composed of PP2A catalytic and scaffolding subunits, the striatins (PP2A regulatory subunits), the striatin-associated proteins MOB4, STRIP1 and STRIP2, PDCD10 and members of the STE20 kinases, such as STK24 and STK26. Interacts (via FHA domain) with STK3 (when phosphorylated); the interaction associates STK3 with the STRIPAK complex.

Its subcellular location is the cell membrane. It is found in the sarcolemma. It localises to the cytoplasm. The protein localises to the myofibril. The protein resides in the sarcomere. Its subcellular location is the m line. It is found in the z line. It localises to the cytoskeleton. The protein localises to the microtubule organizing center. The protein resides in the centrosome. Its subcellular location is the endoplasmic reticulum membrane. It is found in the mitochondrion membrane. Associates with the striatin-interacting phosphatase and kinase (STRIPAK) core complex, forming the extended (SIKE1:SLMAP)STRIPAK complex. The (SIKE1:SLMAP)STRIPAK complex dephosphorylates STK3 leading to the inhibition of Hippo signaling and the control of cell growth. May play a role during myoblast fusion. The sequence is that of Sarcolemmal membrane-associated protein from Homo sapiens (Human).